The primary structure comprises 454 residues: F-box/WD-40 repeat-containing protein At3g52030 (454 aa).

The F-box domain occupies 20-66 (PTSIESLDADILCIIFSFLDLFDLVHCTVVCNSWNAVIKRLKLLQAS). WD repeat units lie at residues 85–116 (DRPAEIDVEDFAMKHHKMALLRGRIEIERWEA), 117–153 (HSHRVSQCRMKKGLLLTGVGDKVMRLWSLKSYKCMEE), 170–214 (SKKL…SIFP), 215–255 (SRAG…CSQI), 258–296 (TQGGPITCLSLSDNQLFLSGSSLGRVTVSDPLMDQPVAT), 301–340 (ITAGGIQTICFNQGTNLAFIGTTGGYVSCWDLRKMDRLWE), 343–383 (VSPN…VLSR), and 422–454 (KVRPQISCIAMGMKKMVTAHNGKCISVWKFNLS).

The chain is F-box/WD-40 repeat-containing protein At3g52030 from Arabidopsis thaliana (Mouse-ear cress).